Here is a 216-residue protein sequence, read N- to C-terminus: Redox-sensing transcriptional repressor Rex (216 aa).

Positions 20–59 (QYYRLFKSLVEENVTRTNSQLISEKIGVDAATIRRDFSLF) form a DNA-binding region, H-T-H motif. 94–99 (GVGNLG) contacts NAD(+).

The protein belongs to the transcriptional regulatory Rex family. In terms of assembly, homodimer.

The protein resides in the cytoplasm. In terms of biological role, modulates transcription in response to changes in cellular NADH/NAD(+) redox state. In Lactococcus lactis subsp. cremoris (Streptococcus cremoris), this protein is Redox-sensing transcriptional repressor Rex.